Here is a 606-residue protein sequence, read N- to C-terminus: Gamma-aminobutyric acid receptor subunit beta (606 aa).

The N-terminal stretch at 1–44 is a signal peptide; it reads MSDSKMDKLARMAPLPRTPLLTIWLAINMALIAQETGHKRIHTV. Residues 45-268 are Extracellular-facing; that stretch reads QAATGGGSML…CEIQFVRSMG (224 aa). Asparagine 58 carries N-linked (GlcNAc...) asparagine glycosylation. Cysteine 185 and cysteine 199 are disulfide-bonded. Asparagine 253 carries N-linked (GlcNAc...) asparagine glycosylation. The next 3 membrane-spanning stretches (helical) occupy residues 269-291, 297-316, and 333-356; these read YYLI…SFWL, PARV…LMSS, and YLGT…YMAK. The Cytoplasmic portion of the chain corresponds to 357–568; that stretch reads RIQMRKQRFM…LGITPSDIDK (212 aa). Disordered regions lie at residues 376-451 and 482-542; these read KQQL…VSNR and HDPK…AAVP. Residues 381–395 show a composition bias toward low complexity; that stretch reads GANQQQANPNPNANV. The segment covering 396 to 425 has biased composition (gly residues); it reads GGPGGVGVGPGGPGGPGGGVNVGVGMGMGP. The span at 430–443 shows a compositional bias: basic residues; sequence GHGHHAHSHGHPHA. Residues 499 to 536 show a composition bias toward gly residues; it reads GGRGGPQSHGPGPGQGGGPPGGGGGGGGGGGPPEGGGD. The helical transmembrane segment at 569-590 threads the bilayer; the sequence is YSRIVFPVCFVCFNLMYWIIYL.

Belongs to the ligand-gated ion channel (TC 1.A.9) family. Gamma-aminobutyric acid receptor (TC 1.A.9.5) subfamily. In terms of assembly, forms oligomers. Interacts with Nlg4; the interaction mediates Rdl clustering. Interacts with Fbxl4; the interaction mediates Rdl degradation. As to expression, expressed in different parts of the brain: the mushroom bodies (alpha, alpha', beta, beta', gamma lobes and peduncles), the neurons projecting to the columnar-type neuron LC9 optic glomerulus, in interneurons connecting the paired olfactory lobes, antennal lobes, PDF-expressing small and large ventral lateral neurons (LNvs) of the circadian clock and lobula columnar neuron 11 (LC11) (at protein level). Expressed in all major ON pathway medulla neurons (Mi1, Tm3, Mi4, and Mi9) and in OFF pathway neurons (Tm1, Tm2, Tm4, and Tm9).

It is found in the cell membrane. It localises to the postsynaptic cell membrane. The protein resides in the cell projection. Its subcellular location is the dendrite. The protein localises to the axon. Its activity is regulated as follows. Activated by agonist muscimol. Insensitive to zinc, glycine, glutamate, and baclofen, loreclezole, to antagonist bicuculline, glycine-receptor antagonist strychnine, and nonselective GABA and glycine antagonist RU 5135. Insensitive to flunitrazepam, pentobarbitone or pregnane steroids such as 5alpha-pregnan-3alpha-ol-20-one. Inhibited by insecticides picrotoxin (PTX), cyclodiene dieldrin, TBPS and lindane. Inhibited by ivermectin, fipronil and pyrafluprole. Inhibited by insecticides picrotoxin (PTX). Its function is as follows. Gamma-aminobutyric acid (GABA) receptor voltage channel subunit. GABA, an inhibitory neurotransmitter, mediates neuronal inhibition by binding to the GABA receptor and opening an integral chloride channel. Together with glutamate receptor GluClalpha, plays an important role in the visual response by regulating the activity of ON/OFF-selective neurons. Plays a role in promoting sleep and sleep latency by regulating the activity of peptidergic PDF neurons. In large ventral lateral clock neurons, clustering is mediated by Nlg4 and protein levels undergo daily degradation in response to the circadian clock. In neurons in the mushroom bodies, has a role in odor memory acquisition where it inhibits appetitive and aversive olfactory learning, probably upstream of Adcy1/adenylate cyclase 1 and GTPase activating protein Nf1. In male-specific GABAergic neurons, plays a role in inhibiting male aggressive behavior during courtship. Gamma-aminobutyric acid (GABA) receptor voltage channel subunit. The protein is Gamma-aminobutyric acid receptor subunit beta (Rdl) of Drosophila melanogaster (Fruit fly).